We begin with the raw amino-acid sequence, 188 residues long: Protease-associated domain-containing protein 1 (188 aa).

A signal peptide spans 1 to 21; the sequence is MVPGAAGWCCLVLWLPACVAA. The 81-residue stretch at 83–163 folds into the PA domain; sequence IQDQIALVER…RSLEQHGLPW (81 aa). A glycan (N-linked (GlcNAc...) asparagine) is linked at Asn-171.

N-glycosylated; required for efficient secretion. In terms of tissue distribution, highly expressed in skeletal muscle, heart and liver. Expressed at intermediate level in kidney.

It localises to the secreted. Its function is as follows. Plays a role in the modulation of physical activity and adiposity. This Homo sapiens (Human) protein is Protease-associated domain-containing protein 1.